The following is a 757-amino-acid chain: MQFSGEGLFFHSPFNSPKKHMFSSSKGLFRGHPCPSIAAGQFCRLLCCPFDHPERVKRESENGSDSAEMVKRRKLEVGQGVARVAGDSSGGKLELPGARQALNQRDRPEIEGVGASPKTEGGRAEGAEKKEFASSQSSQKEQQETPHASATPQASVSPQTSAPPQHVSSSVSEDVLKQGKNGITSKSEKSSVKQPGSRDIYQPSSSREPPVSSIDTRTSSSPKSALEAVMTTSASPSQSRDGSRNTSASPSSSRDAEHLMPTTIFPCPATVPQRIAYLKAIHSALTDKRKLKFPKRAAILEELAAAKRSAGNYMVYTNECRVLVKSIKDGSWRGGKAGGTKTDSKTSGHITSSISNQLDMLASKTKPLLAQNGYPVNPDPLKSGLPSNIGIQHCDRCDKAFDVPKVDNYGSCKYHWARARMGGNSTMPEKFYPCCNQPVGMSEGCEEAPRHVYKLHDLNDLAFVIPFRTVSTSESLDTSTSTSTSTSATTSAPSAKSTKTASRPASTPTKSLTSSLDLEKSRQPFNKARRPRTIFNGPAVNQREPDITLETMKRGIGESRGQADSQERSSEPRERSARVREQPSGSCDQAGSLQTSVVAVDCEMLYTSLGMELCRVTCIDYHGKKTLDRVVRPTGRILDYNTRFSGISDINEPIITESGEKGDSISFEEAHRLILKLINKQTILVGHGLENDLIAMRLIHDRIIDTSILYPDFNPRYKTALKTLALKYLKRTIQTGEHDSMEDALAALDVVKCHLKG.

Disordered regions lie at residues 56–259 (VKRE…AEHL) and 474–590 (ESLD…CDQA). Residues 120-132 (EGGRAEGAEKKEF) show a composition bias toward basic and acidic residues. Composition is skewed to polar residues over residues 145-172 (TPHA…SSVS), 202-223 (QPSS…SSPK), and 230-240 (MTTSASPSQSR). Composition is skewed to low complexity over residues 244–253 (RNTSASPSSS) and 474–502 (ESLD…KTAS). Residues 503-516 (RPASTPTKSLTSSL) are compositionally biased toward polar residues. 2 stretches are compositionally biased toward basic and acidic residues: residues 543 to 557 (REPD…RGIG) and 565 to 581 (SQER…RVRE). One can recognise an Exonuclease domain in the interval 597–751 (VVAVDCEMLY…EDALAALDVV (155 aa)).

Belongs to the REXO1/REXO3 family.

Its subcellular location is the cytoplasm. The protein localises to the nucleus. Functionally, 3' to 5' exoribonuclease required for proper 3' end maturation of MRP RNA and of the U5L snRNA. The sequence is that of RNA exonuclease 3 (REX3) from Yarrowia lipolytica (strain CLIB 122 / E 150) (Yeast).